Consider the following 231-residue polypeptide: Large ribosomal subunit protein uL1 (231 aa).

The protein belongs to the universal ribosomal protein uL1 family. In terms of assembly, part of the 50S ribosomal subunit.

In terms of biological role, binds directly to 23S rRNA. The L1 stalk is quite mobile in the ribosome, and is involved in E site tRNA release. Functionally, protein L1 is also a translational repressor protein, it controls the translation of the L11 operon by binding to its mRNA. This chain is Large ribosomal subunit protein uL1, found in Mesomycoplasma hyopneumoniae (strain 232) (Mycoplasma hyopneumoniae).